Consider the following 654-residue polypeptide: Fructose-1,6-bisphosphatase class 3 (654 aa).

A disordered region spans residues 288–307; the sequence is NPAFKPKKRPDKHERLTQRE. Over residues 298 to 307 the composition is skewed to basic and acidic residues; it reads DKHERLTQRE.

Belongs to the FBPase class 3 family. Requires Mn(2+) as cofactor.

It catalyses the reaction beta-D-fructose 1,6-bisphosphate + H2O = beta-D-fructose 6-phosphate + phosphate. The protein operates within carbohydrate biosynthesis; gluconeogenesis. This is Fructose-1,6-bisphosphatase class 3 from Staphylococcus aureus (strain MRSA252).